The chain runs to 479 residues: Glutamate--tRNA ligase (479 aa).

Positions 9–19 (PSPTGLFHIGT) match the 'HIGH' region motif. A 'KMSKS' region motif is present at residues 248–252 (KLSKR). Lys-251 provides a ligand contact to ATP.

Belongs to the class-I aminoacyl-tRNA synthetase family. Glutamate--tRNA ligase type 1 subfamily. Monomer.

Its subcellular location is the cytoplasm. It carries out the reaction tRNA(Glu) + L-glutamate + ATP = L-glutamyl-tRNA(Glu) + AMP + diphosphate. Catalyzes the attachment of glutamate to tRNA(Glu) in a two-step reaction: glutamate is first activated by ATP to form Glu-AMP and then transferred to the acceptor end of tRNA(Glu). The protein is Glutamate--tRNA ligase of Prochlorococcus marinus (strain MIT 9312).